A 98-amino-acid chain; its full sequence is MMKFVLFGMIVILFSLMGSIRGDDDPGNYPTNAYGNKYYCTILGENEYCRKICKLHGVTYGYCYNSRCWCEKLEDKDVTIWNAVKNHCTNTILYPNGK.

An N-terminal signal peptide occupies residues 1–22 (MMKFVLFGMIVILFSLMGSIRG). Residues 26–89 (PGNYPTNAYG…IWNAVKNHCT (64 aa)) form the LCN-type CS-alpha/beta domain. Disulfide bonds link Cys40–Cys63, Cys49–Cys68, and Cys53–Cys70. At Asn96 the chain carries Asparagine amide.

It belongs to the long (3 C-C) scorpion toxin superfamily. As to quaternary structure, monomer (edited version) and heterodimer (non-edited version) of this alpha chain and a beta chain (AC Q95P90). In terms of tissue distribution, expressed by the venom gland.

It is found in the secreted. Its function is as follows. The heterodimer non-edited LVP1 induces lipolysis in rat adipocytes. Induction of lipolysis by LVP1 appears to be mediated through the beta-2 adrenergic receptor pathway (ADRB2). In terms of biological role, the edited BmKBTx, similar to beta-toxins, may modulate voltage-gated sodium channels (Nav) and may block voltage-gated potassium channels (Kv). Seems to be a rare component in the venom. The sequence is that of Lipolysis-activating peptide 1-alpha chain (LVP1a) from Olivierus martensii (Manchurian scorpion).